The sequence spans 723 residues: Aminodeoxychorismate synthase (723 aa).

The Glutamine amidotransferase type-1 domain maps to 2-195 (RTLLVDNYDS…RDLTERHGRT (194 aa)). Cysteine 82 serves as the catalytic Nucleophile. Residues 96–117 (VGRAPEPRHGRTSAVRHDGTGL) form a disordered region. Residues 98 to 114 (RAPEPRHGRTSAVRHDG) show a composition bias toward basic and acidic residues. Residues histidine 169 and glutamate 171 contribute to the active site. Disordered stretches follow at residues 192 to 219 (HGRTRHGGRAGHGTLPPPAPARETKATT) and 693 to 723 (FPGRERPGKDLDGEPDDGTDAGAPKDLVLPG). The interval 255–723 (LDSSRPGGEL…GAPKDLVLPG (469 aa)) is PABB component. A compositionally biased stretch (basic and acidic residues) spans 695 to 704 (GRERPGKDLD).

The protein in the C-terminal section; belongs to the anthranilate synthase component I family.

It carries out the reaction chorismate + L-glutamine = 4-amino-4-deoxychorismate + L-glutamate. It functions in the pathway antibiotic biosynthesis; candicidin biosynthesis. Its function is as follows. Involved in candicidin biosynthesis. Catalyzes the biosynthesis of 4-amino-4-deoxychorismate (ADC) from chorismate and glutamine. The polypeptide is Aminodeoxychorismate synthase (Streptomyces griseus).